Reading from the N-terminus, the 70-residue chain is Putative ankyrin repeat protein RC0502 (70 aa).

The ANK repeat unit spans residues 9 to 43 (KGRIPIHYATYSKQHEITQILILLQPGSEIDTVDN).

The chain is Putative ankyrin repeat protein RC0502 from Rickettsia conorii (strain ATCC VR-613 / Malish 7).